An 81-amino-acid chain; its full sequence is MDNQQQSQMPPSVISTKDHLYLNDMLNWNLLAMKKAHFMAQQCQDQTLKQELDRVGHMHHDHYQRILKHLQPGQQQSGYIQ.

This is an uncharacterized protein from Bacillus subtilis (strain 168).